The sequence spans 367 residues: tRNA-specific 2-thiouridylase MnmA (367 aa).

Residues 13 to 20 (GLSGGVDS) and Met39 contribute to the ATP site. Residues 99 to 101 (NPD) form an interaction with target base in tRNA region. Cys104 serves as the catalytic Nucleophile. Cys104 and Cys200 are joined by a disulfide. Gly128 contacts ATP. The interval 150–152 (KDQ) is interaction with tRNA. Cys200 (cysteine persulfide intermediate) is an active-site residue. The interaction with tRNA stretch occupies residues 307-308 (RY).

It belongs to the MnmA/TRMU family.

It is found in the cytoplasm. The enzyme catalyses S-sulfanyl-L-cysteinyl-[protein] + uridine(34) in tRNA + AH2 + ATP = 2-thiouridine(34) in tRNA + L-cysteinyl-[protein] + A + AMP + diphosphate + H(+). Functionally, catalyzes the 2-thiolation of uridine at the wobble position (U34) of tRNA, leading to the formation of s(2)U34. This is tRNA-specific 2-thiouridylase MnmA from Neisseria meningitidis serogroup A / serotype 4A (strain DSM 15465 / Z2491).